Consider the following 252-residue polypeptide: Pyrroloquinoline-quinone synthase (252 aa).

It belongs to the PqqC family.

It carries out the reaction 6-(2-amino-2-carboxyethyl)-7,8-dioxo-1,2,3,4,7,8-hexahydroquinoline-2,4-dicarboxylate + 3 O2 = pyrroloquinoline quinone + 2 H2O2 + 2 H2O + H(+). Its pathway is cofactor biosynthesis; pyrroloquinoline quinone biosynthesis. In terms of biological role, ring cyclization and eight-electron oxidation of 3a-(2-amino-2-carboxyethyl)-4,5-dioxo-4,5,6,7,8,9-hexahydroquinoline-7,9-dicarboxylic-acid to PQQ. In Acinetobacter baumannii (strain ACICU), this protein is Pyrroloquinoline-quinone synthase.